We begin with the raw amino-acid sequence, 415 residues long: Adenylosuccinate synthetase (415 aa).

Residues 12-18 (GDEGKGK) and 40-42 (GHT) contribute to the GTP site. Asp-13 serves as the catalytic Proton acceptor. Residues Asp-13 and Gly-40 each contribute to the Mg(2+) site. Residues 13 to 16 (DEGK), 38 to 41 (NAGH), Thr-125, Arg-139, Gln-219, Thr-234, and Arg-298 contribute to the IMP site. Catalysis depends on His-41, which acts as the Proton donor. 294 to 300 (TTTGRPR) is a binding site for substrate. Residues Arg-300, 326-328 (KLD), and 404-406 (STG) contribute to the GTP site.

This sequence belongs to the adenylosuccinate synthetase family. Homodimer. The cofactor is Mg(2+).

Its subcellular location is the cytoplasm. The catalysed reaction is IMP + L-aspartate + GTP = N(6)-(1,2-dicarboxyethyl)-AMP + GDP + phosphate + 2 H(+). It participates in purine metabolism; AMP biosynthesis via de novo pathway; AMP from IMP: step 1/2. In terms of biological role, plays an important role in the de novo pathway of purine nucleotide biosynthesis. Catalyzes the first committed step in the biosynthesis of AMP from IMP. This is Adenylosuccinate synthetase from Wolinella succinogenes (strain ATCC 29543 / DSM 1740 / CCUG 13145 / JCM 31913 / LMG 7466 / NCTC 11488 / FDC 602W) (Vibrio succinogenes).